The chain runs to 342 residues: N-acetyl-gamma-glutamyl-phosphate reductase (342 aa).

Residue Cys-146 is part of the active site.

This sequence belongs to the NAGSA dehydrogenase family. Type 1 subfamily.

Its subcellular location is the cytoplasm. The catalysed reaction is N-acetyl-L-glutamate 5-semialdehyde + phosphate + NADP(+) = N-acetyl-L-glutamyl 5-phosphate + NADPH + H(+). It functions in the pathway amino-acid biosynthesis; L-arginine biosynthesis; N(2)-acetyl-L-ornithine from L-glutamate: step 3/4. In terms of biological role, catalyzes the NADPH-dependent reduction of N-acetyl-5-glutamyl phosphate to yield N-acetyl-L-glutamate 5-semialdehyde. The sequence is that of N-acetyl-gamma-glutamyl-phosphate reductase from Saccharopolyspora erythraea (strain ATCC 11635 / DSM 40517 / JCM 4748 / NBRC 13426 / NCIMB 8594 / NRRL 2338).